The primary structure comprises 900 residues: MRTSLVVCLFWLLFQLHTTHGYNTLVNLAGNWEFSSSNKTVNGTGTVPGDIYSDLYASGIIDNPLFGENHLNLKWIAEDDWTYSRKFRLIDLDDTVGAFLEIESVDTIATVYVNGQKVLHSRNQFLPYHVNVTDIIALGENDITIKFKSSVKYAEKRADEYKKIFGHSLPPDCNPDIYHGECHQNFIRKAQYSFAWDWGPSFPTVGIPSTITINIYRGQYFHDFNWKTRFAHGKWKVAFEFDTFHYGARTIEYSVQIPELGIKESDYYRLSATKSLQTRSKNIMSLSIPMEHEPERWWPNGMGEQKLYDVVVSMGGQVKEKKIGFKTVELVQDLIDPKKPEKGRNFYFKINDEPVFLKGTNWIPVSMFRSDRENIAKTEFLLDSVAEVGMNAIRVWGGGFYESNHFYYYASKKGILVWQDLMFACALYPTTEEFIQNAEEEVSYNVDRISQHTSVIVFSGNNENEAAIRGHWWKASNYTESQQVKDYVLLYQRLAKIAKKVAPTIPFIMSSPSNGVETEEEGGVSKNPYDVRYGDIHYYNEFVNLWRDDTYLTPRCASEYGVQSYPMKETMLNWINESDWEYTSKAMFHRQHHPGGIATNLLMIFQHLPIPAECGSKSVSDVPSCKYISSASYMSRLAYFSQVHQSIALKTQTLHYRRFRNTTTNEGLGNTMCAMYWQLNDVWAAPTWSTIDFEQNWKMAHYEARRFFSNVAVYSFADETDFNLKVFLLNDNPYLLHNITVNVQMLSWGNGLDPILTNEFHIDSVPAGSSEVLKTGITFSKITELSEYLYVSTLYDSSGVKIHEDVLVPDFLFEVDFNTFGDVQISDVQRIDEKTYDLTITTDRVSPFTWITCKKPFTGWFSDNGFHMIQRLRKIRLIAKFEVDLEKSDFTVCNLKNCYV.

The first 21 residues, 1–21 (MRTSLVVCLFWLLFQLHTTHG), serve as a signal peptide directing secretion. 3 N-linked (GlcNAc...) asparagine glycosylation sites follow: Asn38, Asn42, and Asn131. The Proton donor role is filled by Glu463. 4 N-linked (GlcNAc...) asparagine glycosylation sites follow: Asn477, Asn576, Asn661, and Asn738.

The protein belongs to the glycosyl hydrolase 2 family.

The protein localises to the lysosome. It carries out the reaction Hydrolysis of terminal, non-reducing beta-D-mannose residues in beta-D-mannosides.. The polypeptide is Probable beta-mannosidase (Caenorhabditis elegans).